Reading from the N-terminus, the 406-residue chain is Pyruvate dehydrogenase E1 component subunit beta-2, chloroplastic (406 aa).

The transit peptide at 1–44 directs the protein to the chloroplast; sequence MSSIIHGAGAATTTLSTFNSVDSKKLFVAPSRTNLSVRSQRYIV. E142 contributes to the thiamine diphosphate binding site. 4 residues coordinate K(+): V195, A243, I244, and N248.

As to quaternary structure, tetramer of 2 alpha and 2 beta subunits. Requires thiamine diphosphate as cofactor.

The protein resides in the plastid. It localises to the chloroplast. It catalyses the reaction N(6)-[(R)-lipoyl]-L-lysyl-[protein] + pyruvate + H(+) = N(6)-[(R)-S(8)-acetyldihydrolipoyl]-L-lysyl-[protein] + CO2. The pyruvate dehydrogenase complex catalyzes the overall conversion of pyruvate to acetyl-CoA and CO(2). It contains multiple copies of three enzymatic components: pyruvate dehydrogenase (E1), dihydrolipoamide acetyltransferase (E2) and lipoamide dehydrogenase (E3). This chain is Pyruvate dehydrogenase E1 component subunit beta-2, chloroplastic (PDH-E1 BETA), found in Arabidopsis thaliana (Mouse-ear cress).